The primary structure comprises 192 residues: Aminodeoxychorismate synthase component 2 (192 aa).

The 190-residue stretch at 3-192 (SVLMIDNCDS…LANLIHRPCH (190 aa)) folds into the Glutamine amidotransferase type-1 domain. Residues C83, H170, and E172 contribute to the active site.

In terms of assembly, monomer. Heterodimer consisting of two non-identical subunits: a glutamine amidotransferase subunit (PabA) and a aminodeoxychorismate synthase subunit (PabB).

The catalysed reaction is chorismate + L-glutamine = 4-amino-4-deoxychorismate + L-glutamate. The protein operates within cofactor biosynthesis; tetrahydrofolate biosynthesis; 4-aminobenzoate from chorismate: step 1/2. In terms of biological role, part of a heterodimeric complex that catalyzes the two-step biosynthesis of 4-amino-4-deoxychorismate (ADC), a precursor of p-aminobenzoate (PABA) and tetrahydrofolate. In the first step, a glutamine amidotransferase (PabA) generates ammonia as a substrate that, along with chorismate, is used in the second step, catalyzed by aminodeoxychorismate synthase (PabB) to produce ADC. PabA converts glutamine into glutamate only in the presence of stoichiometric amounts of PabB. This chain is Aminodeoxychorismate synthase component 2, found in Streptomyces lividans.